The chain runs to 322 residues: Olfactory receptor 5P2 (322 aa).

The Extracellular segment spans residues 1–28 (MNSLKDGNHTALTGFILLGLTDDPILRV). Residue N8 is glycosylated (N-linked (GlcNAc...) asparagine). A helical membrane pass occupies residues 29 to 42 (ILFMIILSGNLSII). Over 43–50 (ILIRISSQ) the chain is Cytoplasmic. The chain crosses the membrane as a helical span at residues 51–71 (LHHPMYFFLSHLAFADMAYSS). Residues 72 to 95 (SVTPNMLVNFLVERNTVSYLGCAI) are Extracellular-facing. C93 and C185 are joined by a disulfide. The chain crosses the membrane as a helical span at residues 96–116 (QLGSAAFFATVECVLLAAMAY). The Cytoplasmic segment spans residues 117–135 (DRFVAICSPLLYSTKMSTQ). Residues 136 to 156 (VSVQLLLVVYIAGFLIAVSYT) form a helical membrane-spanning segment. Topologically, residues 157 to 192 (TSFYFLLFCGPNQVNHFFCDFAPLLELSCSDISVST) are extracellular. The chain crosses the membrane as a helical span at residues 193-213 (VVLSFSSGSIIVVTVCVIAVC). Topologically, residues 214 to 233 (YIYILITILKMRSTEGHHKA) are cytoplasmic. The helical transmembrane segment at 234–254 (FSTCTSHLTVVTLFYGTITFI) threads the bilayer. The Extracellular portion of the chain corresponds to 255-267 (YVMPNFSYSTDQN). Residue N259 is glycosylated (N-linked (GlcNAc...) asparagine). Residues 268–288 (KVVSVLYTVVIPMLNPLIYSL) form a helical membrane-spanning segment. At 289 to 322 (RNKEIKGALKRELVRKILSHDACYFSRTSNNDIT) the chain is on the cytoplasmic side.

It belongs to the G-protein coupled receptor 1 family. As to expression, expressed in the tongue.

Its subcellular location is the cell membrane. Functionally, odorant receptor (Potential). May be involved in taste perception. This is Olfactory receptor 5P2 (OR5P2) from Homo sapiens (Human).